The chain runs to 128 residues: L-ectoine synthase (128 aa).

This sequence belongs to the ectoine synthase family.

The enzyme catalyses (2S)-4-acetamido-2-aminobutanoate = L-ectoine + H2O. It participates in amine and polyamine biosynthesis; ectoine biosynthesis; L-ectoine from L-aspartate 4-semialdehyde: step 3/3. Its function is as follows. Catalyzes the circularization of gamma-N-acetyl-alpha,gamma-diaminobutyric acid (ADABA) to ectoine (1,4,5,6-tetrahydro-2-methyl-4-pyrimidine carboxylic acid), which is an excellent osmoprotectant. This Vibrio atlanticus (strain LGP32) (Vibrio splendidus (strain Mel32)) protein is L-ectoine synthase.